A 186-amino-acid polypeptide reads, in one-letter code: Protein FAM9B (186 aa).

The interval 1–93 (MAAWGKKHAG…KHALRKKQLK (93 aa)) is disordered. 2 stretches are compositionally biased toward basic and acidic residues: residues 10–27 (GKDP…FTET) and 34–58 (DEHG…KPED). A compositionally biased stretch (basic residues) spans 66 to 93 (KRKRMKMDKTCSKTKNKSKHALRKKQLK).

This sequence belongs to the XLR/SYCP3 family. In terms of tissue distribution, expressed in testis and ovary (at protein level).

It localises to the nucleus. Its subcellular location is the cytoplasm. The protein resides in the chromosome. Functionally, may play a role in meiosis. The chain is Protein FAM9B from Homo sapiens (Human).